A 237-amino-acid polypeptide reads, in one-letter code: MSSAELGKLHIYASPEQWEKWSPRWKSIVFRTQYESIFKNPKHHGEKKPFHCLFKLAGTMKSISLSHLDIPEHRMSNAVAFPITTSTTPMQLDVTLQFRGHKIPLVVGEASVSLEDIFTHGTVESVIPLFMKKRHPEAYLRIKLVYTRSKRKSARKHKVPSSFHRFSGRRGLGIHYNHSGSQSSLITLPLPQKQPDFLRMNNDTNELKTNGFEPIRFVFTTTPYSPASFEVPKTLKT.

This is an uncharacterized protein from Schizosaccharomyces pombe (strain 972 / ATCC 24843) (Fission yeast).